The primary structure comprises 199 residues: Peroxiredoxin-1 (199 aa).

Residue Ser-2 is modified to N-acetylserine. Positions 6-165 (AKIGHRAPQF…TLRLVQAFQF (160 aa)) constitute a Thioredoxin domain. Lys-7 is subject to N6-acetyllysine; alternate. A Glycyl lysine isopeptide (Lys-Gly) (interchain with G-Cter in SUMO2); alternate cross-link involves residue Lys-7. N6-acetyllysine is present on residues Lys-16 and Lys-27. An N6-acetyllysine; alternate modification is found at Lys-35. Lys-35 is subject to N6-succinyllysine; alternate. Cys-52 serves as the catalytic Cysteine sulfenic acid (-SOH) intermediate. Thr-90 carries the phosphothreonine modification. A Glycyl lysine isopeptide (Lys-Gly) (interchain with G-Cter in SUMO2) cross-link involves residue Lys-120. Lys-136 bears the N6-acetyllysine mark. The segment at 176–199 (GWKPGSDTIKPDVQKSKEYFSKQK) is disordered. Residues 184-199 (IKPDVQKSKEYFSKQK) show a composition bias toward basic and acidic residues. Lys-185 is covalently cross-linked (Glycyl lysine isopeptide (Lys-Gly) (interchain with G-Cter in SUMO1)). Residue Lys-197 is modified to N6-acetyllysine.

The protein belongs to the peroxiredoxin family. AhpC/Prx1 subfamily. Homodimer; disulfide-linked, upon oxidation. 5 homodimers assemble to form a ring-like decamer. Interacts with GDPD5; forms a mixed-disulfide with GDPD5. Interacts with SESN1 and SESN2. Interacts with FAM107A. Phosphorylated on Thr-90 during the M-phase, which leads to a decrease in enzymatic activity. Post-translationally, acetylation increases reducing activity and resistance to superoxidation. Deacetylated by HDAC6 which decreases reducing activity.

The protein localises to the cytoplasm. It catalyses the reaction a hydroperoxide + [thioredoxin]-dithiol = an alcohol + [thioredoxin]-disulfide + H2O. In terms of biological role, thiol-specific peroxidase that catalyzes the reduction of hydrogen peroxide and organic hydroperoxides to water and alcohols, respectively. Plays a role in cell protection against oxidative stress by detoxifying peroxides and as sensor of hydrogen peroxide-mediated signaling events. Might participate in the signaling cascades of growth factors and tumor necrosis factor-alpha by regulating the intracellular concentrations of H(2)O(2). Reduces an intramolecular disulfide bond in GDPD5 that gates the ability to GDPD5 to drive postmitotic motor neuron differentiation. The polypeptide is Peroxiredoxin-1 (PRDX1) (Bos taurus (Bovine)).